The following is a 286-amino-acid chain: MARYVVCWMFTINNPTTLPVMRDEIKYMVYQVERGQEGTRHVQGYVEMKRRSSLKQMRGFFPGAHLEKRKGSQEEARSYCMKEDTRIEGPFEFGSFKLSCNDNLFDVIQDMRETHKRPLEYLYDCPNTFDRSKDTLYRVQAEMNKTKAMNSWRTSFSAWTSEVENIMAQPCHRRIIWVYGPNGGEGKTTYAKHLMKTRNAFYSPGGKSLDICRLYNYEDIVIFDIPRCKEDYLNYGLLEEFKNGIIQSGKYEPVLKIVEYVEVIVMANFLPKEGIFSEDRIKLVSC.

A CRESS-DNA virus Rep endonuclease domain is found at 2 to 96 (ARYVVCWMFT…IEGPFEFGSF (95 aa)). Positions 9–12 (MFTI) match the RCR-1 motif. Positions 33 and 41 each coordinate a divalent metal cation. The RCR-2 signature appears at 41–43 (HVQ). The Nuclear localization signal motif lies at 50 to 70 (RRSSLKQMRGFFPGAHLEKRK). Tyr-79 serves as the catalytic For DNA cleavage activity. The short motif at 79 to 82 (YCMK) is the RCR-3 element. Asp-84 is an a divalent metal cation binding site. The Nuclear localization signal motif lies at 96 to 102 (FKLSCND). 180-188 (GPNGGEGKT) serves as a coordination point for ATP.

This sequence belongs to the nanoviridea/circoviridae replication-associated protein family. Homooligomer (Potential). Rep binds to repeated DNA motifs (iterons). Mg(2+) serves as cofactor. The cofactor is Mn(2+).

Its subcellular location is the host nucleus. It catalyses the reaction ATP + H2O = ADP + phosphate + H(+). In terms of biological role, essential for the replication of all genomic viral ssDNA (trans-replication). The closed circular ssDNA genome is first converted to a superhelical dsDNA. Rep binds a specific hairpin at the genome origin of replication. Introduces an endonucleolytic nick within the conserved sequence 5'-A[GT]TATTAC-3' in the intergenic region of the genome, thereby initiating the rolling circle replication (RCR). Following cleavage, binds covalently to the 5'-phosphate of DNA as a tyrosyl ester. The cleavage gives rise to a free 3'-OH that serves as a primer for the cellular DNA polymerase. The polymerase synthesizes the (+) strand DNA by rolling circle mechanism. After one round of replication, a Rep-catalyzed nucleotidyl transfer reaction releases a circular single-stranded virus genome, thereby terminating the replication. Displays origin-specific DNA cleavage, nucleotidyl transferase, ATPase and helicase activities. The chain is Master replication protein (DNA-R) from Musa (BBTV).